The sequence spans 379 residues: Bifunctional enzyme IspD/IspF (379 aa).

Residues 1-213 form a 2-C-methyl-D-erythritol 4-phosphate cytidylyltransferase region; sequence MSQVSLVVMG…QGFEPPFGGC (213 aa). The interval 214 to 379 is 2-C-methyl-D-erythritol 2,4-cyclodiphosphate synthase; it reads YGGSGFDVHA…DWTKHACFNR (166 aa). A divalent metal cation is bound by residues aspartate 220 and histidine 222. 4-CDP-2-C-methyl-D-erythritol 2-phosphate is bound by residues 220–222 and 246–247; these read DVH and HS. Histidine 254 is a binding site for a divalent metal cation. Residues 268–270, 273–277, 344–347, phenylalanine 351, and arginine 354 each bind 4-CDP-2-C-methyl-D-erythritol 2-phosphate; these read DIG, FPDSD, and TTTE.

This sequence in the N-terminal section; belongs to the IspD/TarI cytidylyltransferase family. IspD subfamily. The protein in the C-terminal section; belongs to the IspF family. It depends on a divalent metal cation as a cofactor.

It catalyses the reaction 2-C-methyl-D-erythritol 4-phosphate + CTP + H(+) = 4-CDP-2-C-methyl-D-erythritol + diphosphate. The catalysed reaction is 4-CDP-2-C-methyl-D-erythritol 2-phosphate = 2-C-methyl-D-erythritol 2,4-cyclic diphosphate + CMP. It functions in the pathway isoprenoid biosynthesis; isopentenyl diphosphate biosynthesis via DXP pathway; isopentenyl diphosphate from 1-deoxy-D-xylulose 5-phosphate: step 2/6. The protein operates within isoprenoid biosynthesis; isopentenyl diphosphate biosynthesis via DXP pathway; isopentenyl diphosphate from 1-deoxy-D-xylulose 5-phosphate: step 4/6. Its function is as follows. Bifunctional enzyme that catalyzes the formation of 4-diphosphocytidyl-2-C-methyl-D-erythritol from CTP and 2-C-methyl-D-erythritol 4-phosphate (MEP) (IspD), and catalyzes the conversion of 4-diphosphocytidyl-2-C-methyl-D-erythritol 2-phosphate (CDP-ME2P) to 2-C-methyl-D-erythritol 2,4-cyclodiphosphate (ME-CPP) with a corresponding release of cytidine 5-monophosphate (CMP) (IspF). The polypeptide is Bifunctional enzyme IspD/IspF (Wolinella succinogenes (strain ATCC 29543 / DSM 1740 / CCUG 13145 / JCM 31913 / LMG 7466 / NCTC 11488 / FDC 602W) (Vibrio succinogenes)).